Consider the following 338-residue polypeptide: Phosphoribosylformylglycinamidine cyclo-ligase (338 aa).

Belongs to the AIR synthase family.

The protein resides in the cytoplasm. It carries out the reaction 2-formamido-N(1)-(5-O-phospho-beta-D-ribosyl)acetamidine + ATP = 5-amino-1-(5-phospho-beta-D-ribosyl)imidazole + ADP + phosphate + H(+). It participates in purine metabolism; IMP biosynthesis via de novo pathway; 5-amino-1-(5-phospho-D-ribosyl)imidazole from N(2)-formyl-N(1)-(5-phospho-D-ribosyl)glycinamide: step 2/2. This Lactococcus lactis subsp. lactis (strain IL1403) (Streptococcus lactis) protein is Phosphoribosylformylglycinamidine cyclo-ligase.